Consider the following 150-residue polypeptide: MKYQQLENLESGWKWKYLVKKHREGELITRYIESSAAQVAVDELLLMENRPVDVLQWIDLHINPKLENRMKQTIRARRKRHFNAEHQHTRKKSIDLEYLVWQRLAALAQRRDSTLSETIVQLIEDAERKEQYANQMSSLKHDLQAILGKS.

The protein belongs to the MatP family. Homodimer.

Its subcellular location is the cytoplasm. Its function is as follows. Required for spatial organization of the terminus region of the chromosome (Ter macrodomain) during the cell cycle. Prevents early segregation of duplicated Ter macrodomains during cell division. Binds specifically to matS, which is a 13 bp signature motif repeated within the Ter macrodomain. In Erwinia tasmaniensis (strain DSM 17950 / CFBP 7177 / CIP 109463 / NCPPB 4357 / Et1/99), this protein is Macrodomain Ter protein.